Consider the following 48-residue polypeptide: MGNDAFKLSSADRGDITINNESGHLIVNTAILSGDIVTLRGGEIRLVL.

In Escherichia coli (strain K12), this protein is Protein YodE.